A 209-amino-acid chain; its full sequence is Guanylate kinase (209 aa).

In terms of domain architecture, Guanylate kinase-like spans G9 to T188. S16–T23 serves as a coordination point for ATP.

It belongs to the guanylate kinase family.

The protein localises to the cytoplasm. The enzyme catalyses GMP + ATP = GDP + ADP. Its function is as follows. Essential for recycling GMP and indirectly, cGMP. The polypeptide is Guanylate kinase (Ehrlichia canis (strain Jake)).